The chain runs to 373 residues: Dynein regulatory complex protein 9 (373 aa).

The stretch at 145–200 (EQAMKETIEREKNTTAAVRQLRNDLREEKLDHEEKMKEKKKGLSTLKEQLKALKMD) forms a coiled coil. An IQ domain is found at 336-365 (RAQAAVIIQAWWRGHKVRMVMSGGGKKGAK).

Belongs to the DRC9 family. Component of the nexin-dynein regulatory complex (N-DRC).

The protein resides in the cytoplasm. Its subcellular location is the cytoskeleton. It localises to the flagellum axoneme. Component of the nexin-dynein regulatory complex (N-DRC), a key regulator of ciliary/flagellar motility which maintains the alignment and integrity of the distal axoneme and regulates microtubule sliding in motile axonemes. This chain is Dynein regulatory complex protein 9, found in Chlamydomonas reinhardtii (Chlamydomonas smithii).